The chain runs to 352 residues: uncharacterized protein (352 aa).

A signal peptide spans 1–22 (MIFKKTILIFIISFFFISISFA). Residues 25 to 47 (SSSSSSSSSSSSSSWSSSESSSS) show a composition bias toward low complexity. Positions 25-49 (SSSSSSSSSSSSSSWSSSESSSSPA) are disordered. N-linked (GlcNAc...) asparagine glycans are attached at residues N76, N110, N182, N212, and N223.

It localises to the secreted. This is an uncharacterized protein from Dictyostelium discoideum (Social amoeba).